Consider the following 323-residue polypeptide: Elongation factor P--(R)-beta-lysine ligase (323 aa).

Substrate is bound at residue 74 to 76 (SPE). ATP contacts are provided by residues 98–100 (RNE) and Asn-107. Position 116 (Tyr-116) interacts with substrate. Position 242–243 (242–243 (EL)) interacts with ATP. Substrate is bound at residue Glu-249. Gly-298 contributes to the ATP binding site.

Belongs to the class-II aminoacyl-tRNA synthetase family. EpmA subfamily. Homodimer.

It carries out the reaction D-beta-lysine + L-lysyl-[protein] + ATP = N(6)-((3R)-3,6-diaminohexanoyl)-L-lysyl-[protein] + AMP + diphosphate + H(+). Its function is as follows. With EpmB is involved in the beta-lysylation step of the post-translational modification of translation elongation factor P (EF-P). Catalyzes the ATP-dependent activation of (R)-beta-lysine produced by EpmB, forming a lysyl-adenylate, from which the beta-lysyl moiety is then transferred to the epsilon-amino group of a conserved specific lysine residue in EF-P. In Vibrio campbellii (strain ATCC BAA-1116), this protein is Elongation factor P--(R)-beta-lysine ligase.